We begin with the raw amino-acid sequence, 243 residues long: Probable transcriptional regulatory protein LJ_0904 (243 aa).

The tract at residues 1–22 (MSGHSKWHNIQGRKNAQDAKRG) is disordered.

The protein belongs to the TACO1 family.

Its subcellular location is the cytoplasm. The chain is Probable transcriptional regulatory protein LJ_0904 from Lactobacillus johnsonii (strain CNCM I-12250 / La1 / NCC 533).